Consider the following 406-residue polypeptide: RILP-like protein 1 (406 aa).

At S7 the chain carries Phosphoserine. In terms of domain architecture, RH1 spans 10–97 (AALSALEKNV…RVERMDRIEK (88 aa)). An S-nitrosocysteine modification is found at C47. Residues 76–258 (ELDELRLELD…KLRERLQGEH (183 aa)) are a coiled coil. Disordered stretches follow at residues 255–280 (QGEHSQNGEEEEAEIPPQPDGEESIS) and 330–354 (EIEEENRIPQPPPITHPRTSPQPES). At S259 the chain carries Phosphoserine. Acidic residues predominate over residues 262-280 (GEEEEAEIPPQPDGEESIS). An RH2 domain is found at 294–359 (RPRFTLQELR…PQPESGIKRL (66 aa)).

The protein belongs to the RILPL family. In terms of assembly, interacts (when S-nitrosylated) with GAPDH. Interacts with RAB8A; interaction is dependent on the phosphorylation of 'Thr-72' of RAB8A. Interacts with RAB10 and RAB12; the interaction is dependent on the phosphorylation of 'Thr-73' of RAB10, and 'Ser-105' of RAB12. In terms of processing, S-nitrosylation is required for the interaction with GAPDH. Highly expressed in heart, skeletal muscle, brain and lung (at protein level).

Its subcellular location is the cytoplasm. It localises to the cytosol. It is found in the cytoskeleton. The protein resides in the microtubule organizing center. The protein localises to the centrosome. Its subcellular location is the centriole. It localises to the cilium basal body. Functionally, plays a role in the regulation of cell shape and polarity. Plays a role in cellular protein transport, including protein transport away from primary cilia. Neuroprotective protein, which acts by sequestring GAPDH in the cytosol and prevent the apoptotic function of GAPDH in the nucleus. Competes with SIAH1 for binding GAPDH. Does not regulate lysosomal morphology and distribution. Binds to RAB10 following LRRK2-mediated RAB10 phosphorylation which leads to inhibition of ciliogenesis. This Rattus norvegicus (Rat) protein is RILP-like protein 1 (Rilpl1).